The sequence spans 192 residues: Ciliary microtubule inner protein 3 (192 aa).

Residues 24 to 108 (RAGAEGGPSL…SGQKVKAPHR (85 aa)) are disordered. A compositionally biased stretch (basic residues) spans 55-64 (APRRPPRPRT).

Belongs to the CIMIP3-like family. As to expression, detected in the sperm flagellum (at protein level).

The protein resides in the cytoplasm. It localises to the cytoskeleton. Its subcellular location is the flagellum axoneme. This chain is Ciliary microtubule inner protein 3, found in Bos taurus (Bovine).